Consider the following 244-residue polypeptide: 5-oxoprolinase subunit A (244 aa).

Belongs to the LamB/PxpA family. Forms a complex composed of PxpA, PxpB and PxpC.

It carries out the reaction 5-oxo-L-proline + ATP + 2 H2O = L-glutamate + ADP + phosphate + H(+). Its function is as follows. Catalyzes the cleavage of 5-oxoproline to form L-glutamate coupled to the hydrolysis of ATP to ADP and inorganic phosphate. The protein is 5-oxoprolinase subunit A of Escherichia coli O7:K1 (strain IAI39 / ExPEC).